The sequence spans 476 residues: Aspartyl/glutamyl-tRNA(Asn/Gln) amidotransferase subunit B (476 aa).

This sequence belongs to the GatB/GatE family. GatB subfamily. In terms of assembly, heterotrimer of A, B and C subunits.

The catalysed reaction is L-glutamyl-tRNA(Gln) + L-glutamine + ATP + H2O = L-glutaminyl-tRNA(Gln) + L-glutamate + ADP + phosphate + H(+). It carries out the reaction L-aspartyl-tRNA(Asn) + L-glutamine + ATP + H2O = L-asparaginyl-tRNA(Asn) + L-glutamate + ADP + phosphate + 2 H(+). In terms of biological role, allows the formation of correctly charged Asn-tRNA(Asn) or Gln-tRNA(Gln) through the transamidation of misacylated Asp-tRNA(Asn) or Glu-tRNA(Gln) in organisms which lack either or both of asparaginyl-tRNA or glutaminyl-tRNA synthetases. The reaction takes place in the presence of glutamine and ATP through an activated phospho-Asp-tRNA(Asn) or phospho-Glu-tRNA(Gln). This Clostridium botulinum (strain Eklund 17B / Type B) protein is Aspartyl/glutamyl-tRNA(Asn/Gln) amidotransferase subunit B.